The sequence spans 275 residues: Large ribosomal subunit protein uL2 (275 aa).

The tract at residues 223–275 (VAMNPVDHPHGGGEGRTSGGRHPVSPWGQPTKGYKTRSNKRTDKYIVRRRNKK) is disordered.

This sequence belongs to the universal ribosomal protein uL2 family. Part of the 50S ribosomal subunit. Forms a bridge to the 30S subunit in the 70S ribosome.

Its function is as follows. One of the primary rRNA binding proteins. Required for association of the 30S and 50S subunits to form the 70S ribosome, for tRNA binding and peptide bond formation. It has been suggested to have peptidyltransferase activity; this is somewhat controversial. Makes several contacts with the 16S rRNA in the 70S ribosome. This Shewanella halifaxensis (strain HAW-EB4) protein is Large ribosomal subunit protein uL2.